Reading from the N-terminus, the 274-residue chain is 2-dehydro-3-deoxyphosphooctonate aldolase (274 aa).

It belongs to the KdsA family.

It is found in the cytoplasm. It catalyses the reaction D-arabinose 5-phosphate + phosphoenolpyruvate + H2O = 3-deoxy-alpha-D-manno-2-octulosonate-8-phosphate + phosphate. It participates in carbohydrate biosynthesis; 3-deoxy-D-manno-octulosonate biosynthesis; 3-deoxy-D-manno-octulosonate from D-ribulose 5-phosphate: step 2/3. Its pathway is bacterial outer membrane biogenesis; lipopolysaccharide biosynthesis. This Rickettsia canadensis (strain McKiel) protein is 2-dehydro-3-deoxyphosphooctonate aldolase.